Reading from the N-terminus, the 330-residue chain is Chromatin modification-related protein eaf3 (330 aa).

Residues 13–66 (ERVLCFHHEILYEAKILDVRHTNAEDKKSPFEYLVHYKGWKNTWDDWVPQDRLR) enclose the Tudor-knot domain. The tract at residues 86-125 (AFRQKSTKTTLKRKAGSDRGSARDSEERQTSVPGRVTKRA) is disordered. Residues 100-114 (AGSDRGSARDSEERQ) show a composition bias toward basic and acidic residues. Positions 138 to 315 (TRPSVRIVMP…ATNEYVEKSR (178 aa)) constitute an MRG domain.

Belongs to the MRG family. Component of the NuA4 histone acetyltransferase complex.

The protein resides in the nucleus. Involved in deacetylation of histones, chromatin assembly and chromosome segregation. May act as a transcriptional oscillator, directing histone deacetylases to specific chromosomal domains. Component of the NuA4 histone acetyltransferase complex which is involved in transcriptional activation of selected genes principally by acetylation of nucleosomal histone H4 and H2A. The NuA4 complex is also involved in DNA repair. This Aspergillus fumigatus (strain ATCC MYA-4609 / CBS 101355 / FGSC A1100 / Af293) (Neosartorya fumigata) protein is Chromatin modification-related protein eaf3 (eaf3).